Here is an 861-residue protein sequence, read N- to C-terminus: MQEQYRPDMIEPKVQQYWAENKVFKAIKDESKEKYYCLSMFPYPSGRLHMGHVRNYTIGDVISRYQRMLGKNVLQPFGWDAFGLPAEGAAIKNKTAPAKWTYENIAYMKKQLQLLGFGFDWDREIATCKPEYYKWEQWFFTELYKKGLVYKKTSTVNWCPNDETVLANEQVHEGCCWRCDTPVEQKEIPQWFIKITDYAEQLLGGLDALPQWPDMVKTMQRNWIGRSEGVEITFDVANTNEKVAVYTTRPDTFYGVSYLGIAAAHPLASLAAQNNSELAAFIQEAKNAKVAEADLATMEKKGMATGLFAIHPLTGEKLPIWVANFVLMHYGTGAVMAVPAHDQRDFEFAQKYSLQIKQVIEPIADEEIDLTKQAFVEHGKLVNSAEFDGKDFDGAFNGIADKLEKLGVGKRQVNYRLRDWGVSRQRYWGAPIPMLTLENGDVVPAPMEDLPIILPEDVVMDGVKNPIKADPNWAKTTLNGAPALKETDTFDTFMESSWYYARYTCPQYQNGMLDAEEANYWLPVDQYIGGIEHATMHLLYFRFFHKLLRDAGFVTSDEPADKLLCQGMVLADAFYYTSPTNERIWVSPTLVTLERDEKGRIIKATDPEGRELVHSGMTKMSKSKNNGIDPQEMVEKYGADTVRLFMMFASPAEMTLEWQESGVEGAKRFLGRVWNLVYQYQQNPAKTSLDITALSAEQKVLRREVHKTIAKVSDDIGRRQTFNTAIAAVMELMNKLTKASLDSEQDRAVMAEALSAVVRMLYPITPHICFELWQALGNESAIDTAEWVKADEAAMVEDEKLIVVQVNGKVRGKVTVAADADEDTVKTIAFADENVKKFIDNQHIVKVIYVVGKLLNVVVKP.

The 'HIGH' region signature appears at 42 to 52; that stretch reads PYPSGRLHMGH. The 'KMSKS' region signature appears at 619–623; sequence KMSKS. Residue Lys622 coordinates ATP.

The protein belongs to the class-I aminoacyl-tRNA synthetase family.

It localises to the cytoplasm. It catalyses the reaction tRNA(Leu) + L-leucine + ATP = L-leucyl-tRNA(Leu) + AMP + diphosphate. In Haemophilus influenzae (strain 86-028NP), this protein is Leucine--tRNA ligase.